Reading from the N-terminus, the 194-residue chain is Mitochondrial inner membrane protease ATP23 (194 aa).

Positions 1-20 are disordered; it reads MEDAAAPNSGSEFNPGARRG. Residue H96 participates in Zn(2+) binding. Residue E97 is part of the active site. H100 is a binding site for Zn(2+).

It belongs to the peptidase M76 family.

The protein localises to the mitochondrion inner membrane. Functionally, has a dual role in the assembly of mitochondrial ATPase. Acts as a protease that removes the N-terminal 10 residues of mitochondrial ATPase CF(0) subunit 6 (ATP6) at the intermembrane space side. Also involved in the correct assembly of the membrane-embedded ATPase CF(0) particle, probably mediating association of ATP6 with the subunit 9 ring. The protein is Mitochondrial inner membrane protease ATP23 of Arabidopsis thaliana (Mouse-ear cress).